The sequence spans 344 residues: Phenylalanine--tRNA ligase alpha subunit (344 aa).

Residue Glu256 coordinates Mg(2+).

The protein belongs to the class-II aminoacyl-tRNA synthetase family. Phe-tRNA synthetase alpha subunit type 1 subfamily. As to quaternary structure, tetramer of two alpha and two beta subunits. It depends on Mg(2+) as a cofactor.

It localises to the cytoplasm. It catalyses the reaction tRNA(Phe) + L-phenylalanine + ATP = L-phenylalanyl-tRNA(Phe) + AMP + diphosphate + H(+). The sequence is that of Phenylalanine--tRNA ligase alpha subunit from Bacillus licheniformis (strain ATCC 14580 / DSM 13 / JCM 2505 / CCUG 7422 / NBRC 12200 / NCIMB 9375 / NCTC 10341 / NRRL NRS-1264 / Gibson 46).